Reading from the N-terminus, the 540-residue chain is Zinc finger CCCH domain-containing protein 46 (540 aa).

The C3H1-type zinc-finger motif lies at 148–175 (GFGGVPCSYFARGFCKNGASCRFVHSDG). The 77-residue stretch at 258–334 (RQIYLTFPAD…RVLVKPYKEK (77 aa)) folds into the RRM domain. Basic and acidic residues-rich tracts occupy residues 337–351 (VPDK…EREL) and 436–450 (EYDG…SKEG). Disordered stretches follow at residues 337–365 (VPDK…DVLG), 436–469 (EYDG…LPDS), and 490–514 (SDLW…SFNS). A Phosphoserine modification is found at Ser451. A compositionally biased stretch (low complexity) spans 490-511 (SDLWSPSSDNDDNSTPSTLSDS).

Its function is as follows. Possesses RNA-binding and ribonuclease activities in vitro. The polypeptide is Zinc finger CCCH domain-containing protein 46 (Arabidopsis thaliana (Mouse-ear cress)).